Consider the following 303-residue polypeptide: US1 protein (303 aa).

A disordered region spans residues 230–284 (IPAPGRPLPRRRPSEGGMRAPRRRSRAPAPARSTAAAATPPRPGDPRAPAARRAG). Over residues 256 to 268 (APAPARSTAAAAT) the composition is skewed to low complexity.

Belongs to the herpesviridae US2 family.

This is US1 protein (US1) from Equine herpesvirus 1 (strain Kentucky A) (EHV-1).